We begin with the raw amino-acid sequence, 66 residues long: Alpha-like toxin BeM9 (66 aa).

An LCN-type CS-alpha/beta domain is found at 2 to 66; sequence RDAYIAKPHN…VPIRIPGKCH (65 aa). Disulfide bonds link cysteine 12–cysteine 65, cysteine 16–cysteine 38, cysteine 24–cysteine 48, and cysteine 28–cysteine 50.

This sequence belongs to the long (4 C-C) scorpion toxin superfamily. Sodium channel inhibitor family. Alpha subfamily. In terms of tissue distribution, expressed by the venom gland.

The protein localises to the secreted. Its function is as follows. Alpha toxins bind voltage-independently at site-3 of sodium channels (Nav) and inhibit the inactivation of the activated channels, thereby blocking neuronal transmission. This toxin is active on both mammals and insects, since it inhibits inactivation of rNav1.4/SCN4A, hNav1.5/SCN5A, mNav1.6/SCN8A and insect BgNav1 and DmNav1 channels. In vivo, it shows paralytic activity in mice. This chain is Alpha-like toxin BeM9, found in Mesobuthus eupeus (Lesser Asian scorpion).